We begin with the raw amino-acid sequence, 259 residues long: Small ribosomal subunit protein uS2 (259 aa).

The tract at residues 224-259 is disordered; the sequence is GKQGEDDQQVAPAEDVAEEVSDESLQDLKNSVEGND. Over residues 238–248 the composition is skewed to acidic residues; it reads DVAEEVSDESL. Residues 250-259 show a composition bias toward polar residues; sequence DLKNSVEGND.

This sequence belongs to the universal ribosomal protein uS2 family.

This chain is Small ribosomal subunit protein uS2, found in Limosilactobacillus fermentum (strain NBRC 3956 / LMG 18251) (Lactobacillus fermentum).